The following is a 159-amino-acid chain: Cytochrome c-type biogenesis protein CcmE (159 aa).

The Cytoplasmic segment spans residues 1–8 (MNLRRKNR). A helical; Signal-anchor for type II membrane protein transmembrane segment spans residues 9 to 29 (LWVVCAVLAGLGLTTALVLYA). The Periplasmic portion of the chain corresponds to 30-159 (LRANIDLFYT…PQRADKDTSS (130 aa)). The disordered stretch occupies residues 129–159 (KHDENYTPPEVEKAMQENHRRPQRADKDTSS). Heme-binding residues include His-130 and Tyr-134.

This sequence belongs to the CcmE/CycJ family.

It localises to the cell inner membrane. Functionally, heme chaperone required for the biogenesis of c-type cytochromes. Transiently binds heme delivered by CcmC and transfers the heme to apo-cytochromes in a process facilitated by CcmF and CcmH. This Salmonella typhimurium (strain LT2 / SGSC1412 / ATCC 700720) protein is Cytochrome c-type biogenesis protein CcmE.